Here is a 171-residue protein sequence, read N- to C-terminus: Ribosome maturation factor RimM (171 aa).

Positions 96–170 (PDSYYHFQLE…TMTVRLPDGL (75 aa)) constitute a PRC barrel domain.

It belongs to the RimM family. Binds ribosomal protein uS19.

The protein resides in the cytoplasm. Functionally, an accessory protein needed during the final step in the assembly of 30S ribosomal subunit, possibly for assembly of the head region. Essential for efficient processing of 16S rRNA. May be needed both before and after RbfA during the maturation of 16S rRNA. It has affinity for free ribosomal 30S subunits but not for 70S ribosomes. The polypeptide is Ribosome maturation factor RimM (Heliobacterium modesticaldum (strain ATCC 51547 / Ice1)).